A 168-amino-acid polypeptide reads, in one-letter code: GTP-dependent dephospho-CoA kinase (168 aa).

Positions 49, 50, 51, 68, 70, and 120 each coordinate GTP.

Belongs to the GTP-dependent DPCK family.

It carries out the reaction 3'-dephospho-CoA + GTP = GDP + CoA + H(+). The protein operates within cofactor biosynthesis; coenzyme A biosynthesis. Its function is as follows. Catalyzes the GTP-dependent phosphorylation of the 3'-hydroxyl group of dephosphocoenzyme A to form coenzyme A (CoA). The protein is GTP-dependent dephospho-CoA kinase of Pyrobaculum islandicum (strain DSM 4184 / JCM 9189 / GEO3).